We begin with the raw amino-acid sequence, 302 residues long: G-protein coupled receptor A5 (302 aa).

Topologically, residues 1–20 (MADSSNSSLNCTAIHDQTVL) are extracellular. Residues 21-41 (ILGQVFNSVWLFISVIFLYIF) form a helical membrane-spanning segment. The Cytoplasmic portion of the chain corresponds to 42–50 (ACKLCFRPR). The helical transmembrane segment at 51–71 (IYLWLSFYTLGFMLWVLCKVL) threads the bilayer. Over 72 to 81 (QEYVTGKFKC) the chain is Extracellular. A helical transmembrane segment spans residues 82–102 (VITNCIGDFCLVFLSCIMLGI). Topologically, residues 103 to 122 (MLDRYLKIQGTLRGGMKDIH) are cytoplasmic. Residues 123-143 (IGIFVSASCFGSLMIALLDGL) form a helical membrane-spanning segment. The Extracellular portion of the chain corresponds to 144 to 173 (HMGDSEKLQFNGTESFKCLPATSVSSYKAQ). Residues 174–194 (LMFKSIFCIICIIMCLILTCL) traverse the membrane as a helical segment. Over 195 to 208 (TAKKVLGTRLRKKY) the chain is Cytoplasmic. A helical transmembrane segment spans residues 209–229 (VIVGNVGLLSFVNILLWVMIA). Residues 230–249 (CGLLKQALESNLSLCPTKQS) are Extracellular-facing. A helical membrane pass occupies residues 250–270 (TYIYPYTMPVTVIFVLVIYLF). The Cytoplasmic segment spans residues 271-302 (SSTHMKNAMRKSGQIRHSLSSPNQVQSSFRLV).

The protein belongs to the G-protein coupled receptor 1 family.

The protein localises to the host cell membrane. It localises to the host endoplasmic reticulum membrane. Functionally, acts as a viral G-protein coupled receptor that constitutively activates host alphai-type G-proteins, thereby inhibiting host forskolin-triggered CREB activation. The polypeptide is G-protein coupled receptor A5 (A5) (Connochaetes taurinus (Blue wildebeest)).